We begin with the raw amino-acid sequence, 76 residues long: Translational regulator CsrA (76 aa).

The protein belongs to the CsrA/RsmA family. As to quaternary structure, homodimer; the beta-strands of each monomer intercalate to form a hydrophobic core, while the alpha-helices form wings that extend away from the core.

It is found in the cytoplasm. A translational regulator that binds mRNA to regulate translation initiation and/or mRNA stability. Usually binds in the 5'-UTR at or near the Shine-Dalgarno sequence preventing ribosome-binding, thus repressing translation. Its main target seems to be the major flagellin gene, while its function is anatagonized by FliW. The polypeptide is Translational regulator CsrA (Syntrophomonas wolfei subsp. wolfei (strain DSM 2245B / Goettingen)).